We begin with the raw amino-acid sequence, 141 residues long: Hemoglobin subunit alpha (141 aa).

Positions 1–141 (VLSAADKSNV…VSTVLTSKYR (141 aa)) constitute a Globin domain. Phosphoserine is present on S3. K7 and K11 each carry N6-succinyllysine. Residue K16 is modified to N6-acetyllysine; alternate. K16 carries the N6-succinyllysine; alternate modification. At Y24 the chain carries Phosphotyrosine. At S35 the chain carries Phosphoserine. K40 carries the post-translational modification N6-succinyllysine. A Phosphoserine modification is found at S49. H58 lines the O2 pocket. H87 contacts heme b. S102 is modified (phosphoserine). A Phosphothreonine modification is found at T108. A Phosphoserine modification is found at S124. A phosphothreonine mark is found at T134 and T137. S138 carries the phosphoserine modification.

The protein belongs to the globin family. In terms of assembly, heterotetramer of two alpha chains and two beta chains. In terms of tissue distribution, red blood cells.

Its function is as follows. Involved in oxygen transport from the lung to the various peripheral tissues. Hemopressin acts as an antagonist peptide of the cannabinoid receptor CNR1. Hemopressin-binding efficiently blocks cannabinoid receptor CNR1 and subsequent signaling. The sequence is that of Hemoglobin subunit alpha (HBA) from Rangifer tarandus (Reindeer).